Here is a 330-residue protein sequence, read N- to C-terminus: Aspartate--ammonia ligase (330 aa).

It belongs to the class-II aminoacyl-tRNA synthetase family. AsnA subfamily.

The protein resides in the cytoplasm. It carries out the reaction L-aspartate + NH4(+) + ATP = L-asparagine + AMP + diphosphate + H(+). The protein operates within amino-acid biosynthesis; L-asparagine biosynthesis; L-asparagine from L-aspartate (ammonia route): step 1/1. The sequence is that of Aspartate--ammonia ligase from Shigella boydii serotype 18 (strain CDC 3083-94 / BS512).